A 632-amino-acid polypeptide reads, in one-letter code: Epithelial sodium channel subunit alpha (632 aa).

The Cytoplasmic portion of the chain corresponds to 1-49 (MTKEEKNEKEALIEFFSSYRELFEFFCSNTTIHGAIRLVCSRRNRMKTA). A helical membrane pass occupies residues 50 to 70 (FWLVLFLVTFGLMYWQFGLLF). Residues 71 to 520 (GQYFSYPVSI…SQWSLWFGSS (450 aa)) lie on the Extracellular side of the membrane. Cystine bridges form between C97-C264, C189-C196, C241-C248, C355-C440, C377-C417, C377-C436, C381-C432, C390-C417, C390-C440, and C392-C406. A helical transmembrane segment spans residues 521–541 (VLSVVEMLELVIDFVIIGVMI). Topologically, residues 542–632 (LLHRYYYKKA…YYEENGGRRN (91 aa)) are cytoplasmic. A compositionally biased stretch (low complexity) spans 612-622 (SRSSSMRSNRS). The tract at residues 612–632 (SRSSSMRSNRSYYEENGGRRN) is disordered. Positions 623–632 (YYEENGGRRN) are enriched in basic and acidic residues.

It belongs to the amiloride-sensitive sodium channel (TC 1.A.6) family. SCNN1A subfamily. Heterotrimer; containing an alpha/SCNN1A, a beta/SCNN1B and a gamma/SCNN1G subunit. Interacts with shroom1.

Its subcellular location is the apical cell membrane. It localises to the cell projection. The protein resides in the cilium. It is found in the cytoplasmic granule. The protein localises to the cytoplasm. Its subcellular location is the cytoplasmic vesicle. It localises to the secretory vesicle. The protein resides in the acrosome. It is found in the flagellum. It carries out the reaction Na(+)(in) = Na(+)(out). Its activity is regulated as follows. Originally identified and characterized by its inhibition by the diuretic drug amiloride. Functionally, this is one of the three pore-forming subunits of the heterotrimeric epithelial sodium channel (ENaC), a critical regulator of sodium balance and fluid homeostasis. ENaC operates in epithelial tissues, where it mediates the electrodiffusion of sodium ions from extracellular fluid through the apical membrane of cells, with water following osmotically. It plays a key role in maintaining sodium homeostasis through electrogenic sodium reabsorption in the kidneys. The sequence is that of Epithelial sodium channel subunit alpha from Xenopus laevis (African clawed frog).